Reading from the N-terminus, the 207-residue chain is Probable GTP-binding protein EngB (207 aa).

Residues 22 to 194 (DLPEVAFAGR…LQRLDVALSD (173 aa)) form the EngB-type G domain. GTP-binding positions include 30–37 (GRSNVGKS), 57–61 (GRTQL), 75–78 (DLPG), 142–145 (TKVD), and 173–175 (FSA). 2 residues coordinate Mg(2+): S37 and T59.

This sequence belongs to the TRAFAC class TrmE-Era-EngA-EngB-Septin-like GTPase superfamily. EngB GTPase family. Mg(2+) serves as cofactor.

Functionally, necessary for normal cell division and for the maintenance of normal septation. The sequence is that of Probable GTP-binding protein EngB from Syntrophotalea carbinolica (strain DSM 2380 / NBRC 103641 / GraBd1) (Pelobacter carbinolicus).